Consider the following 806-residue polypeptide: Phenylalanine--tRNA ligase beta subunit (806 aa).

The region spanning 40 to 153 (FNSPDYLQLA…ADAIIIDHVS (114 aa)) is the tRNA-binding domain. One can recognise a B5 domain in the interval 413-487 (PFSKKLTVNF…KLIDINKLKP (75 aa)). Residues aspartate 465, aspartate 471, glutamate 474, and glutamate 475 each contribute to the Mg(2+) site.

The protein belongs to the phenylalanyl-tRNA synthetase beta subunit family. Type 1 subfamily. Tetramer of two alpha and two beta subunits. Requires Mg(2+) as cofactor.

The protein localises to the cytoplasm. The catalysed reaction is tRNA(Phe) + L-phenylalanine + ATP = L-phenylalanyl-tRNA(Phe) + AMP + diphosphate + H(+). The sequence is that of Phenylalanine--tRNA ligase beta subunit (pheT) from Mycoplasma genitalium (strain ATCC 33530 / DSM 19775 / NCTC 10195 / G37) (Mycoplasmoides genitalium).